The chain runs to 116 residues: Large ribosomal subunit protein uL18 (116 aa).

This sequence belongs to the universal ribosomal protein uL18 family. In terms of assembly, part of the 50S ribosomal subunit; part of the 5S rRNA/L5/L18/L25 subcomplex. Contacts the 5S and 23S rRNAs.

Functionally, this is one of the proteins that bind and probably mediate the attachment of the 5S RNA into the large ribosomal subunit, where it forms part of the central protuberance. In Pseudomonas entomophila (strain L48), this protein is Large ribosomal subunit protein uL18.